We begin with the raw amino-acid sequence, 144 residues long: Cytochrome c oxidase subunit 4 isoform 1, mitochondrial (144 aa).

Topologically, residues serine 1–asparagine 73 are mitochondrial matrix. Lysine 4 carries the post-translational modification N6-acetyllysine; alternate. Lysine 4 carries the N6-succinyllysine; alternate modification. Position 28 is an N6-acetyllysine (lysine 28). Phosphoserine is present on residues serine 31 and serine 33. Position 35 is an N6-acetyllysine; alternate (lysine 35). Residue lysine 35 is modified to N6-succinyllysine; alternate. At lysine 42 the chain carries N6-acetyllysine. Residues glutamate 74–tyrosine 99 form a helical membrane-spanning segment. Residues valine 100–lysine 144 lie on the Mitochondrial intermembrane side of the membrane.

This sequence belongs to the cytochrome c oxidase IV family. As to quaternary structure, component of the cytochrome c oxidase (complex IV, CIV), a multisubunit enzyme composed of 14 subunits. The complex is composed of a catalytic core of 3 subunits MT-CO1, MT-CO2 and MT-CO3, encoded in the mitochondrial DNA, and 11 supernumerary subunits COX4I, COX5A, COX5B, COX6A, COX6B, COX6C, COX7A, COX7B, COX7C, COX8 and NDUFA4, which are encoded in the nuclear genome. The complex exists as a monomer or a dimer and forms supercomplexes (SCs) in the inner mitochondrial membrane with NADH-ubiquinone oxidoreductase (complex I, CI) and ubiquinol-cytochrome c oxidoreductase (cytochrome b-c1 complex, complex III, CIII), resulting in different assemblies (supercomplex SCI(1)III(2)IV(1) and megacomplex MCI(2)III(2)IV(2)). Interacts with PHB2; the interaction decreases in absence of SPHK2. Interacts with AFG1L. Interacts with ABCB7; this interaction allows the regulation of cellular iron homeostasis and cellular reactive oxygen species (ROS) levels in cardiomyocytes. Interacts with FLVCR2; this interaction occurs in the absence of heme and is disrupted upon heme binding. Interacts with IRGC.

Its subcellular location is the mitochondrion inner membrane. It participates in energy metabolism; oxidative phosphorylation. Functionally, component of the cytochrome c oxidase, the last enzyme in the mitochondrial electron transport chain which drives oxidative phosphorylation. The respiratory chain contains 3 multisubunit complexes succinate dehydrogenase (complex II, CII), ubiquinol-cytochrome c oxidoreductase (cytochrome b-c1 complex, complex III, CIII) and cytochrome c oxidase (complex IV, CIV), that cooperate to transfer electrons derived from NADH and succinate to molecular oxygen, creating an electrochemical gradient over the inner membrane that drives transmembrane transport and the ATP synthase. Cytochrome c oxidase is the component of the respiratory chain that catalyzes the reduction of oxygen to water. Electrons originating from reduced cytochrome c in the intermembrane space (IMS) are transferred via the dinuclear copper A center (CU(A)) of subunit 2 and heme A of subunit 1 to the active site in subunit 1, a binuclear center (BNC) formed by heme A3 and copper B (CU(B)). The BNC reduces molecular oxygen to 2 water molecules using 4 electrons from cytochrome c in the IMS and 4 protons from the mitochondrial matrix. The chain is Cytochrome c oxidase subunit 4 isoform 1, mitochondrial (COX4I1) from Gorilla gorilla gorilla (Western lowland gorilla).